The primary structure comprises 257 residues: 3-methyl-2-oxobutanoate hydroxymethyltransferase (257 aa).

Mg(2+)-binding residues include D42 and D86. 3-methyl-2-oxobutanoate is bound by residues D42 to S43, D86, and K116. E118 lines the Mg(2+) pocket. The active-site Proton acceptor is E185.

Belongs to the PanB family. Homodecamer; pentamer of dimers. Mg(2+) serves as cofactor.

It localises to the cytoplasm. The catalysed reaction is 3-methyl-2-oxobutanoate + (6R)-5,10-methylene-5,6,7,8-tetrahydrofolate + H2O = 2-dehydropantoate + (6S)-5,6,7,8-tetrahydrofolate. The protein operates within cofactor biosynthesis; (R)-pantothenate biosynthesis; (R)-pantoate from 3-methyl-2-oxobutanoate: step 1/2. Catalyzes the reversible reaction in which hydroxymethyl group from 5,10-methylenetetrahydrofolate is transferred onto alpha-ketoisovalerate to form ketopantoate. The chain is 3-methyl-2-oxobutanoate hydroxymethyltransferase from Prochlorococcus marinus subsp. pastoris (strain CCMP1986 / NIES-2087 / MED4).